A 646-amino-acid chain; its full sequence is Peptidylprolyl isomerase domain and WD repeat-containing protein 1 (646 aa).

The segment at 1–30 (MAAESGSDFQQRRRRRRDPEEPEKTELSER) is disordered. Position 2 is an N-acetylalanine (alanine 2). Residues 17–30 (RDPEEPEKTELSER) show a composition bias toward basic and acidic residues. 7 WD repeats span residues 80 to 118 (ASMYERSYMHRDVITHVVCTKTDFIITASHDGHVKFWKK), 124 to 162 (EFVKHFRSHLGVIESIAVSSEGALFCSVGDDKAMKVFDV), 168 to 208 (INML…IYDG), 213 to 252 (QPLHIFDKLHTSPLTQIRLNPVYKAVVSSDKSGMIEYWTG), 271 to 309 (TDLYEFAKCKAYPTSVCFSPDGKKIATIGSDRKVRIFRF), 345 to 386 (AVER…VETN), and 401 to 453 (MQLA…MFTK). Residues 455–478 (EPEDTKSADSDRDVFNEKPSKEEV) are compositionally biased toward basic and acidic residues. A disordered region spans residues 455–490 (EPEDTKSADSDRDVFNEKPSKEEVMAATQAEGPKRV). Residues 490 to 645 (VSDSAIIHTS…EDVSIINITV (156 aa)) enclose the PPIase cyclophilin-type domain.

This sequence belongs to the cyclophilin-type PPIase family. PPIL1 subfamily. In terms of assembly, identified in the spliceosome C complex.

Its subcellular location is the nucleus. The catalysed reaction is [protein]-peptidylproline (omega=180) = [protein]-peptidylproline (omega=0). With respect to regulation, inhibited by cyclosporin A (CsA). PPIase that catalyzes the cis-trans isomerization of proline imidic peptide bonds in oligopeptides and may therefore assist protein folding. May be involved in pre-mRNA splicing. This chain is Peptidylprolyl isomerase domain and WD repeat-containing protein 1, found in Homo sapiens (Human).